Here is a 98-residue protein sequence, read N- to C-terminus: NADH-ubiquinone oxidoreductase chain 4L (98 aa).

A run of 3 helical transmembrane segments spans residues 1 to 21 (MPLIYMNIMLAFTISLLGMLV), 29 to 49 (SLLCLEGMMLSLFIMTTLMTL), and 58 to 78 (IVPITMLVFAACEAAVGLALL).

The protein belongs to the complex I subunit 4L family. As to quaternary structure, core subunit of respiratory chain NADH dehydrogenase (Complex I) which is composed of 45 different subunits.

Its subcellular location is the mitochondrion inner membrane. It catalyses the reaction a ubiquinone + NADH + 5 H(+)(in) = a ubiquinol + NAD(+) + 4 H(+)(out). In terms of biological role, core subunit of the mitochondrial membrane respiratory chain NADH dehydrogenase (Complex I) which catalyzes electron transfer from NADH through the respiratory chain, using ubiquinone as an electron acceptor. Part of the enzyme membrane arm which is embedded in the lipid bilayer and involved in proton translocation. The sequence is that of NADH-ubiquinone oxidoreductase chain 4L (MT-ND4L) from Pan paniscus (Pygmy chimpanzee).